The following is a 137-amino-acid chain: NADH-quinone oxidoreductase subunit A (137 aa).

The next 3 membrane-spanning stretches (helical) occupy residues W12–S32, F66–W86, and T96–F116.

This sequence belongs to the complex I subunit 3 family. NDH-1 is composed of 13 different subunits. Subunits NuoA, H, J, K, L, M, N constitute the membrane sector of the complex.

The protein localises to the cell inner membrane. The catalysed reaction is a quinone + NADH + 5 H(+)(in) = a quinol + NAD(+) + 4 H(+)(out). NDH-1 shuttles electrons from NADH, via FMN and iron-sulfur (Fe-S) centers, to quinones in the respiratory chain. The immediate electron acceptor for the enzyme in this species is believed to be ubiquinone. Couples the redox reaction to proton translocation (for every two electrons transferred, four hydrogen ions are translocated across the cytoplasmic membrane), and thus conserves the redox energy in a proton gradient. This is NADH-quinone oxidoreductase subunit A from Pseudomonas fluorescens (strain Pf0-1).